The following is a 213-amino-acid chain: Pyrrolidone-carboxylate peptidase (213 aa).

Catalysis depends on residues glutamate 78, cysteine 141, and histidine 165.

The protein belongs to the peptidase C15 family. As to quaternary structure, homotetramer.

The protein localises to the cytoplasm. It catalyses the reaction Release of an N-terminal pyroglutamyl group from a polypeptide, the second amino acid generally not being Pro.. Removes 5-oxoproline from various penultimate amino acid residues except L-proline. The sequence is that of Pyrrolidone-carboxylate peptidase from Clostridium perfringens (strain 13 / Type A).